Reading from the N-terminus, the 97-residue chain is Large ribosomal subunit protein eL21 (97 aa).

Belongs to the eukaryotic ribosomal protein eL21 family.

This chain is Large ribosomal subunit protein eL21, found in Methanosarcina mazei (strain ATCC BAA-159 / DSM 3647 / Goe1 / Go1 / JCM 11833 / OCM 88) (Methanosarcina frisia).